Consider the following 73-residue polypeptide: UPF0352 protein APL_0584 (73 aa).

Belongs to the UPF0352 family.

This chain is UPF0352 protein APL_0584, found in Actinobacillus pleuropneumoniae serotype 5b (strain L20).